Consider the following 309-residue polypeptide: Olfactory receptor 14A16 (309 aa).

At 1 to 23 the chain is on the extracellular side; that stretch reads MANLTIVTEFILMGFSTNKNMCI. Asn-3 carries N-linked (GlcNAc...) asparagine glycosylation. The chain crosses the membrane as a helical span at residues 24 to 44; the sequence is LHSILFLLIYLCALMGNVLII. Residues 45–52 lie on the Cytoplasmic side of the membrane; the sequence is MITTLDHH. A helical membrane pass occupies residues 53–73; the sequence is LHTPVYFFLKNLSFLDLCLIS. The Extracellular segment spans residues 74-97; that stretch reads VTAPKSIANSLIHNNSISFLGCVS. Asn-87 is a glycosylation site (N-linked (GlcNAc...) asparagine). Cys-95 and Cys-187 are joined by a disulfide. A helical transmembrane segment spans residues 98–118; it reads QVFLLLSSASAELLLLTVMSF. The Cytoplasmic portion of the chain corresponds to 119 to 131; sequence DRYTAICHPLHYD. Residues 132 to 152 form a helical membrane-spanning segment; sequence VIMDRSTCVQRATVSWLYGGL. Residues 153-194 are Extracellular-facing; the sequence is IAVMHTAGTFSLSYCGSNMVHQFFCDIPQLLAISCSENLIRE. A helical membrane pass occupies residues 195 to 215; the sequence is IALILINVVLDFCCFIVIIIT. Residues 216-235 are Cytoplasmic-facing; it reads YVHVFSTVKKIPSTEGQSKA. Residues 236-255 form a helical membrane-spanning segment; sequence YSICLPHLLVVLFLSTGFIA. Topologically, residues 256-268 are extracellular; it reads YLKPASESPSILD. A helical transmembrane segment spans residues 269 to 289; that stretch reads AVISVFYTMLPPTFNPIIYSL. Residues 290–309 are Cytoplasmic-facing; that stretch reads RNKAIKVALGMLIKGKLTKK.

The protein belongs to the G-protein coupled receptor 1 family.

It is found in the cell membrane. Functionally, odorant receptor. The protein is Olfactory receptor 14A16 (OR14A16) of Homo sapiens (Human).